Consider the following 260-residue polypeptide: Putative ATP-binding protein BruAb2_1123 (260 aa).

In terms of domain architecture, ABC transporter spans 5–228 (ISFNNVVMRY…DLPYPRTEAI (224 aa)). Position 37–44 (37–44 (GPSGCGKS)) interacts with ATP.

Belongs to the ABC transporter superfamily. As to quaternary structure, the complex is composed of two ATP-binding proteins (BruAb2_1123), two transmembrane proteins (BruAb2_1124) and a solute-binding protein (BruAb2_1122).

It is found in the cell inner membrane. Functionally, probably part of an ABC transporter complex. Probably Responsible for energy coupling to the transport system. This chain is Putative ATP-binding protein BruAb2_1123, found in Brucella abortus biovar 1 (strain 9-941).